A 198-amino-acid polypeptide reads, in one-letter code: Copy number protein (198 aa).

The protein resides in the cell membrane. Functionally, involved in copy number control of pIP404. This basic and hydrophobic protein may exert its effect from the cytoplasmic membrane. In Clostridium perfringens, this protein is Copy number protein (cop).